Here is a 299-residue protein sequence, read N- to C-terminus: MTNDLDLIKLLSPSAMDQIMLYLAFSAMRTGGHRHGAFLDAAATAAKCAIYMTYLEQDGNIRMTGHLHHIEPKRVKAIVEEVRQALTEGKLLKMLGSQEPRYLIQLPYVWMEQYPWQPGRSRVPGTSLTSEEKRQIEQKLPNNLPDAQLINSFQFLELIEFLNTRSQEDLPPEQRMPLSEALAEHIKRRLLYSGTVTRIESPWGMPFYALTRASYSPEDQEERAYVMIEDTARFFRLMQDWAKREDQVMRVLEELDIPDDRVRDAIAELDEILRNWADRYHQEGGKPFVVQMVFGSTET.

The active site involves Ser-152.

This sequence belongs to the peptidase S48 family. As to quaternary structure, homodimer; disulfide-linked.

Might be involved in temporal and/or spatial regulation of nitrogen fixation. Dimerization is required for DNA-binding. Has both a protease and a DNA-binding activity. This chain is DNA-binding transcriptional activator HetR, found in Leptolyngbya boryana (Plectonema boryanum).